The primary structure comprises 391 residues: Methionine import ATP-binding protein MetN 2 (391 aa).

Positions 44–280 (VHVGKVFATP…PRHGATRALL (237 aa)) constitute an ABC transporter domain. An ATP-binding site is contributed by 77–84 (GRSGAGKS).

This sequence belongs to the ABC transporter superfamily. Methionine importer (TC 3.A.1.24) family. As to quaternary structure, the complex is composed of two ATP-binding proteins (MetN), two transmembrane proteins (MetI) and a solute-binding protein (MetQ).

Its subcellular location is the cell inner membrane. It carries out the reaction L-methionine(out) + ATP + H2O = L-methionine(in) + ADP + phosphate + H(+). It catalyses the reaction D-methionine(out) + ATP + H2O = D-methionine(in) + ADP + phosphate + H(+). Its function is as follows. Part of the ABC transporter complex MetNIQ involved in methionine import. Responsible for energy coupling to the transport system. The polypeptide is Methionine import ATP-binding protein MetN 2 (Burkholderia ambifaria (strain ATCC BAA-244 / DSM 16087 / CCUG 44356 / LMG 19182 / AMMD) (Burkholderia cepacia (strain AMMD))).